The following is a 336-amino-acid chain: Holliday junction branch migration complex subunit RuvB (336 aa).

A large ATPase domain (RuvB-L) region spans residues 4–184; sequence ADRLISAASN…FGIVQRLEFY (181 aa). ATP is bound by residues Ile23, Arg24, Gly65, Lys68, Thr69, Thr70, 131 to 133, Arg174, Tyr184, and Arg221; that span reads EDY. Thr69 serves as a coordination point for Mg(2+). The interval 185–255 is small ATPAse domain (RuvB-S); the sequence is QVPDLQYIVG…VAAQALDMLN (71 aa). The tract at residues 258–336 is head domain (RuvB-H); the sequence is AEGFDYMDRK…HFGITPPEMP (79 aa). DNA contacts are provided by Arg294, Arg313, and Arg318.

This sequence belongs to the RuvB family. Homohexamer. Forms an RuvA(8)-RuvB(12)-Holliday junction (HJ) complex. HJ DNA is sandwiched between 2 RuvA tetramers; dsDNA enters through RuvA and exits via RuvB. An RuvB hexamer assembles on each DNA strand where it exits the tetramer. Each RuvB hexamer is contacted by two RuvA subunits (via domain III) on 2 adjacent RuvB subunits; this complex drives branch migration. In the full resolvosome a probable DNA-RuvA(4)-RuvB(12)-RuvC(2) complex forms which resolves the HJ.

The protein resides in the cytoplasm. The catalysed reaction is ATP + H2O = ADP + phosphate + H(+). Functionally, the RuvA-RuvB-RuvC complex processes Holliday junction (HJ) DNA during genetic recombination and DNA repair, while the RuvA-RuvB complex plays an important role in the rescue of blocked DNA replication forks via replication fork reversal (RFR). RuvA specifically binds to HJ cruciform DNA, conferring on it an open structure. The RuvB hexamer acts as an ATP-dependent pump, pulling dsDNA into and through the RuvAB complex. RuvB forms 2 homohexamers on either side of HJ DNA bound by 1 or 2 RuvA tetramers; 4 subunits per hexamer contact DNA at a time. Coordinated motions by a converter formed by DNA-disengaged RuvB subunits stimulates ATP hydrolysis and nucleotide exchange. Immobilization of the converter enables RuvB to convert the ATP-contained energy into a lever motion, pulling 2 nucleotides of DNA out of the RuvA tetramer per ATP hydrolyzed, thus driving DNA branch migration. The RuvB motors rotate together with the DNA substrate, which together with the progressing nucleotide cycle form the mechanistic basis for DNA recombination by continuous HJ branch migration. Branch migration allows RuvC to scan DNA until it finds its consensus sequence, where it cleaves and resolves cruciform DNA. The chain is Holliday junction branch migration complex subunit RuvB from Enterobacter sp. (strain 638).